A 680-amino-acid chain; its full sequence is DNA ligase (680 aa).

Residue 32-36 (DTVYD) participates in NAD(+) binding. The tract at residues 47-66 (QNDPGLQRPDSPTQRVGGAP) is disordered. NAD(+) is bound by residues 81–82 (SL) and Glu-115. Lys-117 functions as the N6-AMP-lysine intermediate in the catalytic mechanism. Residues Arg-138, Glu-175, Lys-291, and Lys-315 each coordinate NAD(+). Residues Cys-409, Cys-412, Cys-427, and Cys-432 each coordinate Zn(2+). A BRCT domain is found at 602–680 (DADGVLQGKT…EADLTALLQP (79 aa)).

It belongs to the NAD-dependent DNA ligase family. LigA subfamily. Mg(2+) is required as a cofactor. The cofactor is Mn(2+).

It catalyses the reaction NAD(+) + (deoxyribonucleotide)n-3'-hydroxyl + 5'-phospho-(deoxyribonucleotide)m = (deoxyribonucleotide)n+m + AMP + beta-nicotinamide D-nucleotide.. Its function is as follows. DNA ligase that catalyzes the formation of phosphodiester linkages between 5'-phosphoryl and 3'-hydroxyl groups in double-stranded DNA using NAD as a coenzyme and as the energy source for the reaction. It is essential for DNA replication and repair of damaged DNA. This Synechococcus sp. (strain CC9605) protein is DNA ligase.